A 1082-amino-acid chain; its full sequence is RNA-directed RNA polymerase (1082 aa).

In terms of domain architecture, RdRp catalytic spans 498–670 (LSYGDVTRYL…ALASLTGCEI (173 aa)).

The protein belongs to the reoviridae RNA-directed RNA polymerase family. Interacts with VP3 (Potential). Interacts with VP2; this interaction activates VP1. Interacts with NSP5; this interaction is probably necessary for the formation of functional virus factories. Interacts with NSP2; this interaction is weak. It depends on Mg(2+) as a cofactor.

The protein resides in the virion. It carries out the reaction RNA(n) + a ribonucleoside 5'-triphosphate = RNA(n+1) + diphosphate. Its function is as follows. RNA-directed RNA polymerase that is involved in both transcription and genome replication. Together with VP3 capping enzyme, forms an enzyme complex positioned near the channels situated at each of the five-fold vertices of the core. Following infection, the outermost layer of the virus is lost, leaving a double-layered particle (DLP) made up of the core and VP6 shell. VP1 then catalyzes the transcription of fully conservative plus-strand genomic RNAs that are extruded through the DLP's channels into the cytoplasm where they function as mRNAs for translation of viral proteins. One copy of each of the viral (+)RNAs is also recruited during core assembly, together with newly synthesized polymerase complexes and VP2. The polymerase of these novo-formed particles catalyzes the synthesis of complementary minus-strands leading to dsDNA formation. To do so, the polymerase specifically recognizes conserved 3' sequence(s) in plus-strand RNA templates. Once dsRNA synthesis is complete, the polymerase switches to the transcriptional mode, thus providing secondary transcription. This chain is RNA-directed RNA polymerase, found in Rotavirus C (strain RVC/Pig/United States/Cowden/1980) (RV-C).